The chain runs to 106 residues: PAT complex subunit Asterix (106 aa).

Residues 1 to 29 (MSANNMSDPRRPNKVLRYKPPPSECNPAL) form a disordered region. S2 carries the N-acetylserine modification. Over 2 to 32 (SANNMSDPRRPNKVLRYKPPPSECNPALDDP) the chain is Cytoplasmic. A helical membrane pass occupies residues 33 to 51 (TPDYMNLLGMIFSMCGLML). A topological domain (lumenal) is located at residue K52. The helical transmembrane segment at 53–70 (LKWCAWVAVYCSFISFAN) threads the bilayer. The Cytoplasmic segment spans residues 71–74 (SRSS). Residues 75-95 (EDTKQMMSSFMLSISAVVMSY) traverse the membrane as a helical segment. Over 96–106 (LQNPQPMTPPW) the chain is Lumenal.

This sequence belongs to the Asterix family. As to quaternary structure, component of the PAT complex, composed of WDR83OS/Asterix and CCDC47. The PAT complex is part of the multi-pass translocon (MPT) complex, composed of three subcomplexes, the GEL complex (composed of RAB5IF/OPTI and TMCO1), the BOS complex (composed of NCLN/Nicalin, NOMO1 and TMEM147) and the PAT complex (composed of WDR83OS/Asterix and CCDC47). The MPT complex associates with the SEC61 complex.

The protein localises to the endoplasmic reticulum membrane. Functionally, component of the multi-pass translocon (MPT) complex that mediates insertion of multi-pass membrane proteins into the lipid bilayer of membranes. The MPT complex takes over after the SEC61 complex: following membrane insertion of the first few transmembrane segments of proteins by the SEC61 complex, the MPT complex occludes the lateral gate of the SEC61 complex to promote insertion of subsequent transmembrane regions. Within the MPT complex, the PAT subcomplex sequesters any highly polar regions in the transmembrane domains away from the non-polar membrane environment until they can be buried in the interior of the fully assembled protein. Within the PAT subcomplex, WDR83OS/Asterix binds to and redirects the substrate to a location behind the SEC61 complex. The polypeptide is PAT complex subunit Asterix (WDR83OS) (Bos taurus (Bovine)).